The primary structure comprises 303 residues: Fe-S cluster assembly protein DRE2 (303 aa).

The N-terminal SAM-like domain stretch occupies residues 1–125 (MTHSRTALVL…WQKRAVTASA (125 aa)). Residues 126-188 (PVKLAPRQPV…GDAPIAENDL (63 aa)) form a linker region. Residues C202, C213, C216, and C218 each contribute to the [2Fe-2S] cluster site. The interval 202 to 218 (CGRTQTRRRKACKDCTC) is fe-S binding site A. [4Fe-4S] cluster-binding residues include C266, C269, C277, and C280. 2 short sequence motifs (cx2C motif) span residues 266 to 269 (CGSC) and 277 to 280 (CSGC). Residues 266 to 280 (CGSCSLGDAFRCSGC) are fe-S binding site B.

This sequence belongs to the anamorsin family. As to quaternary structure, monomer. Interacts with TAH18. Interacts with MIA40. It depends on [2Fe-2S] cluster as a cofactor. [4Fe-4S] cluster serves as cofactor.

The protein resides in the cytoplasm. The protein localises to the mitochondrion intermembrane space. Its function is as follows. Component of the cytosolic iron-sulfur (Fe-S) protein assembly (CIA) machinery required for the maturation of extramitochondrial Fe-S proteins. Part of an electron transfer chain functioning in an early step of cytosolic Fe-S biogenesis, facilitating the de novo assembly of a [4Fe-4S] cluster on the scaffold complex CFD1-NBP35. Electrons are transferred to DRE2 from NADPH via the FAD- and FMN-containing protein TAH18. TAH18-DRE2 are also required for the assembly of the diferric tyrosyl radical cofactor of ribonucleotide reductase (RNR), probably by providing electrons for reduction during radical cofactor maturation in the catalytic small subunit RNR2. This chain is Fe-S cluster assembly protein DRE2, found in Eremothecium gossypii (strain ATCC 10895 / CBS 109.51 / FGSC 9923 / NRRL Y-1056) (Yeast).